The primary structure comprises 832 residues: pre-rRNA 2'-O-ribose RNA methyltransferase FTSJ3 (832 aa).

S-adenosyl-L-methionine-binding residues include Gly56, Trp58, Asp76, Asp92, and Asp117. Lys157 functions as the Proton acceptor in the catalytic mechanism. Disordered regions lie at residues 332–358 (INLS…ADEM), 485–523 (RLER…LEEK), and 546–631 (DADE…GLVE). Composition is skewed to basic and acidic residues over residues 345 to 358 (EEEK…ADEM) and 485 to 495 (RLERERREQGV). A compositionally biased stretch (acidic residues) spans 503 to 514 (EEEEEEEEEEEN). Basic residues predominate over residues 570-579 (KTKKKGQKKK). The segment covering 600–618 (AEAEAEQSSDDDSSSDEEG) has biased composition (acidic residues). Positions 726–758 (IKKVAEAKARKKRRMLKKMEQMKKKAEAVVSTV) form a coiled coil. The disordered stretch occupies residues 795-832 (GPRVRRPPGVKGQFKVVDSRLKKDVRAQKRKEQKKRRK). Over residues 811–821 (VDSRLKKDVRA) the composition is skewed to basic and acidic residues. A compositionally biased stretch (basic residues) spans 822-832 (QKRKEQKKRRK).

Belongs to the class I-like SAM-binding methyltransferase superfamily. RNA methyltransferase RlmE family. SPB1 subfamily. In terms of assembly, interacts with NIP7.

It is found in the nucleus. The protein resides in the nucleolus. The enzyme catalyses a ribonucleotide in rRNA + S-adenosyl-L-methionine = a 2'-O-methylribonucleotide in rRNA + S-adenosyl-L-homocysteine + H(+). RNA 2'-O-methyltransferase involved in the processing of the 34S pre-rRNA to 18S rRNA and in 40S ribosomal subunit formation. The chain is pre-rRNA 2'-O-ribose RNA methyltransferase FTSJ3 from Gallus gallus (Chicken).